Reading from the N-terminus, the 496-residue chain is Probable cytosol aminopeptidase (496 aa).

Mn(2+) is bound by residues K266 and D271. Residue K278 is part of the active site. Mn(2+)-binding residues include D289, D348, and E350. The active site involves R352.

The protein belongs to the peptidase M17 family. It depends on Mn(2+) as a cofactor.

Its subcellular location is the cytoplasm. The enzyme catalyses Release of an N-terminal amino acid, Xaa-|-Yaa-, in which Xaa is preferably Leu, but may be other amino acids including Pro although not Arg or Lys, and Yaa may be Pro. Amino acid amides and methyl esters are also readily hydrolyzed, but rates on arylamides are exceedingly low.. It carries out the reaction Release of an N-terminal amino acid, preferentially leucine, but not glutamic or aspartic acids.. In terms of biological role, presumably involved in the processing and regular turnover of intracellular proteins. Catalyzes the removal of unsubstituted N-terminal amino acids from various peptides. The polypeptide is Probable cytosol aminopeptidase (Stutzerimonas stutzeri (strain A1501) (Pseudomonas stutzeri)).